The following is a 127-amino-acid chain: Serum amyloid A protein (127 aa).

The signal sequence occupies residues 1–18 (MKLLTSLFLLSLVLCVNS). The residue at position 19 (Gln19) is a Pyrrolidone carboxylic acid. The segment at 89–127 (GGSSGRGVEDSMADQEANRWGRSGKDPNRYRPKGLDPKY) is disordered. The segment covering 104–127 (EANRWGRSGKDPNRYRPKGLDPKY) has biased composition (basic and acidic residues).

The protein belongs to the SAA family. In terms of tissue distribution, expressed by the liver; secreted in plasma.

It localises to the secreted. Major acute phase reactant. Apolipoprotein of the HDL complex. In Notamacropus eugenii (Tammar wallaby), this protein is Serum amyloid A protein (SAA1).